The primary structure comprises 280 residues: Energy-coupling factor transporter ATP-binding protein EcfA1 (280 aa).

Positions 6-241 (LRTENISFQY…SHMLQEIGLD (236 aa)) constitute an ABC transporter domain. An ATP-binding site is contributed by 40–47 (GQNGSGKS).

This sequence belongs to the ABC transporter superfamily. Energy-coupling factor EcfA family. In terms of assembly, forms a stable energy-coupling factor (ECF) transporter complex composed of 2 membrane-embedded substrate-binding proteins (S component), 2 ATP-binding proteins (A component) and 2 transmembrane proteins (T component).

Its subcellular location is the cell membrane. Its function is as follows. ATP-binding (A) component of a common energy-coupling factor (ECF) ABC-transporter complex. Unlike classic ABC transporters this ECF transporter provides the energy necessary to transport a number of different substrates. The polypeptide is Energy-coupling factor transporter ATP-binding protein EcfA1 (Bacillus cereus (strain ZK / E33L)).